The following is a 147-amino-acid chain: Hemoglobin subunit beta (147 aa).

Residues 3–147 form the Globin domain; that stretch reads HWTAEEKQII…VAHALARKYH (145 aa). Heme b-binding residues include His64 and His93.

In terms of assembly, heterotetramer of two alpha (or alpha-D) and two beta chains. In terms of tissue distribution, red blood cells.

In terms of biological role, involved in oxygen transport from the lung to the various peripheral tissues. The beta chain is a component of adult hemoglobin A and D. The protein is Hemoglobin subunit beta of Aythya fuligula (Tufted duck).